The sequence spans 502 residues: Probable malate:quinone oxidoreductase (502 aa).

This sequence belongs to the MQO family. The cofactor is FAD.

The catalysed reaction is (S)-malate + a quinone = a quinol + oxaloacetate. Its pathway is carbohydrate metabolism; tricarboxylic acid cycle; oxaloacetate from (S)-malate (quinone route): step 1/1. The protein is Probable malate:quinone oxidoreductase of Synechococcus sp. (strain CC9605).